A 348-amino-acid chain; its full sequence is N-acetyl-gamma-glutamyl-phosphate reductase (348 aa).

The active site involves C149.

This sequence belongs to the NAGSA dehydrogenase family. Type 1 subfamily.

It is found in the cytoplasm. The enzyme catalyses N-acetyl-L-glutamate 5-semialdehyde + phosphate + NADP(+) = N-acetyl-L-glutamyl 5-phosphate + NADPH + H(+). The protein operates within amino-acid biosynthesis; L-arginine biosynthesis; N(2)-acetyl-L-ornithine from L-glutamate: step 3/4. Catalyzes the NADPH-dependent reduction of N-acetyl-5-glutamyl phosphate to yield N-acetyl-L-glutamate 5-semialdehyde. This Cellvibrio japonicus (strain Ueda107) (Pseudomonas fluorescens subsp. cellulosa) protein is N-acetyl-gamma-glutamyl-phosphate reductase.